A 532-amino-acid chain; its full sequence is BTB/POZ domain-containing protein 3 (532 aa).

Positions 23-54 (KNRSKKSSKKTNTGGGGGGSSSSSSSSSNSKL) are disordered. Over residues 43-53 (SSSSSSSSNSK) the composition is skewed to low complexity. The region spanning 130-200 (ADVHFVVGPP…IYCDEIDLAA (71 aa)) is the BTB domain. In terms of domain architecture, BACK spans 245 to 310 (FEEPDLTQRC…NWAEVECQRQ (66 aa)).

As to expression, expressed in visual cortex. Expressed in visual cortex layer IV neurons.

It localises to the cytoplasm. The protein resides in the cytosol. The protein localises to the nucleus. In terms of biological role, acts as a key regulator of dendritic field orientation during development of sensory cortex. Also directs dendrites toward active axon terminals when ectopically expressed. This chain is BTB/POZ domain-containing protein 3 (BTBD3), found in Mustela putorius furo (European domestic ferret).